The chain runs to 436 residues: 3-ketoacyl-CoA thiolase (436 aa).

Cys99 serves as the catalytic Acyl-thioester intermediate. Catalysis depends on proton acceptor residues His392 and Cys422.

Belongs to the thiolase-like superfamily. Thiolase family. Heterotetramer of two alpha chains (FadJ) and two beta chains (FadI).

It is found in the cytoplasm. The enzyme catalyses an acyl-CoA + acetyl-CoA = a 3-oxoacyl-CoA + CoA. It functions in the pathway lipid metabolism; fatty acid beta-oxidation. In terms of biological role, catalyzes the final step of fatty acid oxidation in which acetyl-CoA is released and the CoA ester of a fatty acid two carbons shorter is formed. This is 3-ketoacyl-CoA thiolase from Escherichia coli (strain SMS-3-5 / SECEC).